Consider the following 131-residue polypeptide: Protein TIFY 5A (131 aa).

An EAR motif is present at residues 9 to 13 (LELRL). Disordered regions lie at residues 14–44 (FPTS…EESQ) and 74–131 (REMK…HSRR). Positions 16-34 (TSYDSDSSDTTSVVESTSS) are enriched in low complexity. The Tify domain maps to 39–74 (PNEESQRITIFYNGKMCFSSDVTHLQARSIISIASR). Over residues 79 to 100 (KSSSNGSDPPNKSTSFHHNQLP) the composition is skewed to polar residues. The Jas signature appears at 105-127 (SMKKSLQSFLQKRKIRIQATSPY). The Nuclear localization signal signature appears at 106–113 (MKKSLQSF). The segment covering 122 to 131 (QATSPYHSRR) has biased composition (polar residues).

The protein belongs to the TIFY/JAZ family. In terms of assembly, interacts with TPL and weakly with COI1, but not with AFPH2/NINJA. Interacts with MYC2, MYB21, MYB24, TIFY10A/JAZ1, TIFY10B/JAZ2, TIFY6B/JAZ3, TIFY6A/JAZ4, TIFY11A/JAZ5, TIFY11B/JAZ6, TIFY7/JAZ9, TIFY9/JAZ10 and TIFY3B/JAZ12. Interacts with RHD6 and RSL1. (Microbial infection) Interacts with the pathogenic Pseudomonas syringae HopZ1a protein. Post-translationally, (Microbial infection) Acetylated by Pseudomonas syringae HopZ1a. In terms of processing, ubiquitinated.

It localises to the nucleus. Functionally, repressor of jasmonate responses. Unable to associate strongly with COI1 in the presence of jasmonoyl-isoleucine (JA-Ile) and is therefore more resistant to JA-mediated-degradation than other TIFY/JAZ proteins. Repress gene expression through direct recruitment of the corepressor TOPLESS to cognate transcription factors. Interacts with and suppresses RHD6 and RSL1 transcription factor activities to negatively regulate jasmonate-stimulated root hair development. The polypeptide is Protein TIFY 5A (Arabidopsis thaliana (Mouse-ear cress)).